Here is a 236-residue protein sequence, read N- to C-terminus: Sugar fermentation stimulation protein homolog (236 aa).

This sequence belongs to the SfsA family.

The protein is Sugar fermentation stimulation protein homolog of Paramagnetospirillum magneticum (strain ATCC 700264 / AMB-1) (Magnetospirillum magneticum).